The sequence spans 380 residues: Lipid-A-disaccharide synthase (380 aa).

It belongs to the LpxB family.

The catalysed reaction is a lipid X + a UDP-2-N,3-O-bis[(3R)-3-hydroxyacyl]-alpha-D-glucosamine = a lipid A disaccharide + UDP + H(+). The protein operates within bacterial outer membrane biogenesis; LPS lipid A biosynthesis. In terms of biological role, condensation of UDP-2,3-diacylglucosamine and 2,3-diacylglucosamine-1-phosphate to form lipid A disaccharide, a precursor of lipid A, a phosphorylated glycolipid that anchors the lipopolysaccharide to the outer membrane of the cell. The sequence is that of Lipid-A-disaccharide synthase from Francisella tularensis subsp. tularensis (strain FSC 198).